The primary structure comprises 1494 residues: Neuropathy target esterase sws (1494 aa).

At 1–35 (MDVLELLRVSGSNMYYSTFLADAWCYYISNQITMT) the chain is on the lumenal side. The helical transmembrane segment at 36-56 (MYLYCALGVLSMLFIGWFVYF) threads the bilayer. The Cytoplasmic segment spans residues 57-1494 (KRLARLRLRH…NTNNETKNYL (1438 aa)). 176–303 (IFGHFEKPIF…IRVIQVIMIR (128 aa)) lines the a nucleoside 3',5'-cyclic phosphate pocket. A compositionally biased stretch (low complexity) spans 362–372 (ASGTAGSTHTA). Disordered regions lie at residues 362-405 (ASGT…ELSG) and 422-452 (NSYPPLYHQRESDGNLSTRRGSITQQEQPEV). A compositionally biased stretch (polar residues) spans 435-449 (GNLSTRRGSITQQEQ). Residue Ser-443 is modified to Phosphoserine. A nucleoside 3',5'-cyclic phosphate contacts are provided by residues 474-601 (ELGL…VVRR) and 590-717 (IVLD…LSHR). Residues 944–1110 (LVLGGGGARG…VNNLPGHLWR (167 aa)) enclose the PNPLA domain. Residues 948 to 953 (GGGARG) carry the GXGXXG motif. Positions 975–979 (GVSIG) match the GXSXG motif. Residue Ser-977 is the Nucleophile of the active site. The Proton acceptor role is filled by Asp-1097. Residues 1097–1099 (DGG) carry the DGA/G motif. Positions 1367–1494 (MDKATQSTPP…NTNNETKNYL (128 aa)) are disordered. The segment covering 1370 to 1381 (ATQSTPPLQSKA) has biased composition (polar residues). Composition is skewed to basic and acidic residues over residues 1389-1420 (SKEEARHEWEIKREQKQELAREQELERERELS) and 1452-1483 (MDKKKTKDNDRDEVRGSAEDKGKEKEEDKENR). The segment covering 1484-1494 (SNTNNETKNYL) has biased composition (polar residues).

The protein belongs to the NTE family. As to quaternary structure, interacts with Pka-C3; interaction inhibits the catalytic function of Pka-C3 and the esterase activity of sws.

The protein resides in the endoplasmic reticulum membrane. The catalysed reaction is a 1-acyl-sn-glycero-3-phosphocholine + H2O = sn-glycerol 3-phosphocholine + a fatty acid + H(+). Phospholipase B that deacylates intracellular phosphatidylcholine (PtdCho), generating glycerophosphocholine (GroPtdCho). This deacylation occurs at both sn-2 and sn-1 positions of PtdCho. Its specific chemical modification by certain organophosphorus (OP) compounds leads to distal axonopathy. Plays a role in the signaling mechanism between neurons and glia that regulates glia wrapping during development of the adult brain. Essential for membrane lipid homeostasis and cell survival in both neurons and glia of the adult brain. The polypeptide is Neuropathy target esterase sws (Drosophila pseudoobscura pseudoobscura (Fruit fly)).